Consider the following 352-residue polypeptide: Histidinol-phosphate aminotransferase (352 aa).

Lysine 221 carries the N6-(pyridoxal phosphate)lysine modification.

This sequence belongs to the class-II pyridoxal-phosphate-dependent aminotransferase family. Histidinol-phosphate aminotransferase subfamily. As to quaternary structure, homodimer. It depends on pyridoxal 5'-phosphate as a cofactor.

The enzyme catalyses L-histidinol phosphate + 2-oxoglutarate = 3-(imidazol-4-yl)-2-oxopropyl phosphate + L-glutamate. Its pathway is amino-acid biosynthesis; L-histidine biosynthesis; L-histidine from 5-phospho-alpha-D-ribose 1-diphosphate: step 7/9. This chain is Histidinol-phosphate aminotransferase, found in Staphylococcus aureus (strain MRSA252).